We begin with the raw amino-acid sequence, 467 residues long: Membrane-bound lytic murein transglycosylase F (467 aa).

The first 33 residues, M1–A33, serve as a signal peptide directing secretion. Residues I34 to V266 form a non-LT domain region. Positions Q268–N467 are LT domain. E313 is a catalytic residue.

It in the N-terminal section; belongs to the bacterial solute-binding protein 3 family. The protein in the C-terminal section; belongs to the transglycosylase Slt family.

It localises to the cell outer membrane. It catalyses the reaction Exolytic cleavage of the (1-&gt;4)-beta-glycosidic linkage between N-acetylmuramic acid (MurNAc) and N-acetylglucosamine (GlcNAc) residues in peptidoglycan, from either the reducing or the non-reducing ends of the peptidoglycan chains, with concomitant formation of a 1,6-anhydrobond in the MurNAc residue.. In terms of biological role, murein-degrading enzyme that degrades murein glycan strands and insoluble, high-molecular weight murein sacculi, with the concomitant formation of a 1,6-anhydromuramoyl product. Lytic transglycosylases (LTs) play an integral role in the metabolism of the peptidoglycan (PG) sacculus. Their lytic action creates space within the PG sacculus to allow for its expansion as well as for the insertion of various structures such as secretion systems and flagella. This Alcanivorax borkumensis (strain ATCC 700651 / DSM 11573 / NCIMB 13689 / SK2) protein is Membrane-bound lytic murein transglycosylase F.